The primary structure comprises 308 residues: Elongation factor Ts (308 aa).

The interval 80-83 is involved in Mg(2+) ion dislocation from EF-Tu; it reads TDFV.

This sequence belongs to the EF-Ts family.

The protein localises to the cytoplasm. In terms of biological role, associates with the EF-Tu.GDP complex and induces the exchange of GDP to GTP. It remains bound to the aminoacyl-tRNA.EF-Tu.GTP complex up to the GTP hydrolysis stage on the ribosome. The polypeptide is Elongation factor Ts (Rhodopseudomonas palustris (strain BisB5)).